We begin with the raw amino-acid sequence, 295 residues long: MRIFVTGAAGFIGSEIVRQLLEAGHEVVGLVRSEENAAKLRAAGGTPYIGTLEDLDTLKKGVAQCDGVIHTAFVHDFSIYQEACKLDARVIEAIGEVLRGTERPLITTSVTAVLSSNGKLGTEISEVPQPPIPRQLGEVTTLKFASQGVRASILRLPPTVHGAGDHAFVPMLINVAKNKGVSAYIGNGMNCWPAVHRTDAANLFVLALEKETAGSIYHAVAEEGIPIKEIAGMIGKRLDIPVISVSSEEATEHFGFLSSFLSVDNPTSSILTQQRLGWKPTHSTLMTDLASDAYF.

Belongs to the NAD(P)-dependent epimerase/dehydratase family.

This is an uncharacterized protein from Schizosaccharomyces pombe (strain 972 / ATCC 24843) (Fission yeast).